Here is a 334-residue protein sequence, read N- to C-terminus: MIEADRLIQPQIQAQDESIDRAMRPKMLDEYTGQDDTRAQLKVFIQAAKNRNEALDHMLIYGPPGLGKTTLAMIVANEMGVNIKSTSGPVLEKAGDLAALLTNLESGDVLFIDEIHRLSPVVEEILYPAMEDYQLDIMIGEGPAARSIKLDLPPFTLVGATTRAGALTSPLRARFGIPLRLEFYNIKDLSTIVTRSAQVMELDIDAEGAFEIARRSRGTPRIANRLLRRVRDYAQVKHDGAVTKFVAEHALDLLDVDSEGFDYMDRKLLLAIIDKFMGGPVGLDNLAAAIGEERETIEDVLEPFLIQQGFIQRTPRGRIATVRAYQHFELIKPE.

The large ATPase domain (RuvB-L) stretch occupies residues 4 to 184; sequence ADRLIQPQIQ…FGIPLRLEFY (181 aa). Residues Arg24, Gly65, Lys68, Thr69, Thr70, 131-133, Arg174, Tyr184, and Arg221 each bind ATP; that span reads EDY. Residue Thr69 participates in Mg(2+) binding. Positions 185–255 are small ATPAse domain (RuvB-S); it reads NIKDLSTIVT…VAEHALDLLD (71 aa). The segment at 258 to 334 is head domain (RuvB-H); it reads SEGFDYMDRK…YQHFELIKPE (77 aa). DNA-binding residues include Arg294, Arg313, and Arg318.

Belongs to the RuvB family. As to quaternary structure, homohexamer. Forms an RuvA(8)-RuvB(12)-Holliday junction (HJ) complex. HJ DNA is sandwiched between 2 RuvA tetramers; dsDNA enters through RuvA and exits via RuvB. An RuvB hexamer assembles on each DNA strand where it exits the tetramer. Each RuvB hexamer is contacted by two RuvA subunits (via domain III) on 2 adjacent RuvB subunits; this complex drives branch migration. In the full resolvosome a probable DNA-RuvA(4)-RuvB(12)-RuvC(2) complex forms which resolves the HJ.

It localises to the cytoplasm. The catalysed reaction is ATP + H2O = ADP + phosphate + H(+). Its function is as follows. The RuvA-RuvB-RuvC complex processes Holliday junction (HJ) DNA during genetic recombination and DNA repair, while the RuvA-RuvB complex plays an important role in the rescue of blocked DNA replication forks via replication fork reversal (RFR). RuvA specifically binds to HJ cruciform DNA, conferring on it an open structure. The RuvB hexamer acts as an ATP-dependent pump, pulling dsDNA into and through the RuvAB complex. RuvB forms 2 homohexamers on either side of HJ DNA bound by 1 or 2 RuvA tetramers; 4 subunits per hexamer contact DNA at a time. Coordinated motions by a converter formed by DNA-disengaged RuvB subunits stimulates ATP hydrolysis and nucleotide exchange. Immobilization of the converter enables RuvB to convert the ATP-contained energy into a lever motion, pulling 2 nucleotides of DNA out of the RuvA tetramer per ATP hydrolyzed, thus driving DNA branch migration. The RuvB motors rotate together with the DNA substrate, which together with the progressing nucleotide cycle form the mechanistic basis for DNA recombination by continuous HJ branch migration. Branch migration allows RuvC to scan DNA until it finds its consensus sequence, where it cleaves and resolves cruciform DNA. The sequence is that of Holliday junction branch migration complex subunit RuvB from Shewanella baltica (strain OS195).